The chain runs to 273 residues: MANEHAIGFMDSGVGGLTVVKQALKQLPRETVYFIGDQARLPYGPRPAEQVRTFSFQMADFLMAKQIKMLVIACNTATAAALPALRQQLSIPVIGVIAPGSRAALKASHRNRIGVIATEGTIRSNAYRDAILTKDPTATVVSQACPKFVPLVESNEYQSTVAKRVVAETLKQLKKQDVDTLVLGCTHYPLLRPLIQNVMGPGVTLIDSGAETVNDVSAVLDYLDIANDRSTKRYPDEYYTTGAADQFEAIARNWLGQPDFHAQHIDLGSEAND.

Substrate contacts are provided by residues 11–12 (DS) and 43–44 (YG). The active-site Proton donor/acceptor is the Cys-74. 75 to 76 (NT) is a substrate binding site. Residue Cys-185 is the Proton donor/acceptor of the active site. Residue 186 to 187 (TH) coordinates substrate.

Belongs to the aspartate/glutamate racemases family.

The catalysed reaction is L-glutamate = D-glutamate. The protein operates within cell wall biogenesis; peptidoglycan biosynthesis. Provides the (R)-glutamate required for cell wall biosynthesis. In Lactiplantibacillus plantarum (strain ATCC BAA-793 / NCIMB 8826 / WCFS1) (Lactobacillus plantarum), this protein is Glutamate racemase.